The chain runs to 402 residues: Plasminogen activator inhibitor 1 (402 aa).

Residues 1–22 (MQMSSALACLILGLVLVSGKGF) form the signal peptide. N-linked (GlcNAc...) asparagine glycans are attached at residues Asn-232, Asn-288, and Asn-352.

Belongs to the serpin family. Forms a heterodimer with TMPRSS7. Interacts with VTN. Binds LRP1B; binding is followed by internalization and degradation. Interacts with PPP1CB. In complex with PLAU/uPA, interacts with PLAUR/uPAR. Interacts with SORL1 and LRP1, either alone or in complex with PLAU; these interactions are abolished in the presence of LRPAP1/RAP. The ternary complex composed of PLAUR-PLAU-PAI1 also interacts with SORL1. Interacts with PLAT/tPA. Also interacts with SORL1, when complexed to PLAT/tPA.

It localises to the secreted. Serine protease inhibitor. Inhibits TMPRSS7. Is a primary inhibitor of tissue-type plasminogen activator (PLAT) and urokinase-type plasminogen activator (PLAU). As PLAT inhibitor, it is required for fibrinolysis down-regulation and is responsible for the controlled degradation of blood clots. As PLAU inhibitor, it is involved in the regulation of cell adhesion and spreading. Acts as a regulator of cell migration, independently of its role as protease inhibitor. It is required for stimulation of keratinocyte migration during cutaneous injury repair. Involved in cellular and replicative senescence. Plays a role in alveolar type 2 cells senescence in the lung. Is involved in the regulation of cementogenic differentiation of periodontal ligament stem cells, and regulates odontoblast differentiation and dentin formation during odontogenesis. This is Plasminogen activator inhibitor 1 (Serpine1) from Mus musculus (Mouse).